The chain runs to 439 residues: MERIEFIDVVDIYVKAGDGGNGAVTFRREKYIPFGGPDGGDGGDGGYVFLVADTTLSTLYHLTEKKKYFAENAQNGRSRKQNGKNGADLVLRVPVGTIVKDYDTGEIIADLDEPGKYCCVARGGKGGRGNTHFKSSTNQAPKFAEQGAKGEEKHIQLELKLLADVGLIGYPNVGKSSIISKISNARPKIANYPFTTLVPNLGVVSINGTPETSFVVADIPGLIKGASEGKGLGNVFLKHVERCSVIVHVIDVSGSEGRDPIQDYFDIRKELEFFSKDLAKKRELIVGNKSDLLTPEEINAVKDRFLKEIGEGILLISAVTGQGINELKYAMWDIIKESKKMYVGTIDITKIEFEKPSPVRLVLPDRVDIKILKNDKGEFIVESEYIKSYLEKYKMEAKFMLEDVLDILQKNGLDEKLKKAGAKDGDTVWVEGVDFIFKE.

One can recognise an Obg domain in the interval 4 to 162 (IEFIDVVDIY…KHIQLELKLL (159 aa)). Residues 163–336 (ADVGLIGYPN…LKYAMWDIIK (174 aa)) form the OBG-type G domain. GTP contacts are provided by residues 169–176 (GYPNVGKS), 194–198 (FTTLV), 218–221 (DIPG), 288–291 (NKSD), and 317–319 (SAV). Mg(2+)-binding residues include S176 and T196. The region spanning 361–439 (LVLPDRVDIK…VEGVDFIFKE (79 aa)) is the OCT domain.

The protein belongs to the TRAFAC class OBG-HflX-like GTPase superfamily. OBG GTPase family. Monomer. Mg(2+) is required as a cofactor.

It localises to the cytoplasm. Its function is as follows. An essential GTPase which binds GTP, GDP and possibly (p)ppGpp with moderate affinity, with high nucleotide exchange rates and a fairly low GTP hydrolysis rate. Plays a role in control of the cell cycle, stress response, ribosome biogenesis and in those bacteria that undergo differentiation, in morphogenesis control. The chain is GTPase Obg from Fervidobacterium nodosum (strain ATCC 35602 / DSM 5306 / Rt17-B1).